Here is a 360-residue protein sequence, read N- to C-terminus: Phospho-N-acetylmuramoyl-pentapeptide-transferase (360 aa).

10 consecutive transmembrane segments (helical) span residues 24–44, 69–89, 92–112, 133–153, 158–178, 199–219, 239–259, 263–283, 288–308, and 337–357; these read RAVM…PWTI, GTPT…TLLW, WANP…ALGF, MVWQ…LAAN, ILIV…GFLV, GLAA…AYVS, VAIF…FNAY, VFMG…VAVI, FVLV…MLQV, and QVVV…LSTL.

Belongs to the glycosyltransferase 4 family. MraY subfamily. Mg(2+) is required as a cofactor.

It localises to the cell inner membrane. The enzyme catalyses UDP-N-acetyl-alpha-D-muramoyl-L-alanyl-gamma-D-glutamyl-meso-2,6-diaminopimeloyl-D-alanyl-D-alanine + di-trans,octa-cis-undecaprenyl phosphate = di-trans,octa-cis-undecaprenyl diphospho-N-acetyl-alpha-D-muramoyl-L-alanyl-D-glutamyl-meso-2,6-diaminopimeloyl-D-alanyl-D-alanine + UMP. Its pathway is cell wall biogenesis; peptidoglycan biosynthesis. Catalyzes the initial step of the lipid cycle reactions in the biosynthesis of the cell wall peptidoglycan: transfers peptidoglycan precursor phospho-MurNAc-pentapeptide from UDP-MurNAc-pentapeptide onto the lipid carrier undecaprenyl phosphate, yielding undecaprenyl-pyrophosphoryl-MurNAc-pentapeptide, known as lipid I. The sequence is that of Phospho-N-acetylmuramoyl-pentapeptide-transferase from Neisseria gonorrhoeae (strain ATCC 700825 / FA 1090).